The following is a 92-amino-acid chain: Small ribosomal subunit protein uS19 (92 aa).

The protein belongs to the universal ribosomal protein uS19 family.

Functionally, protein S19 forms a complex with S13 that binds strongly to the 16S ribosomal RNA. This chain is Small ribosomal subunit protein uS19, found in Methylobacterium sp. (strain 4-46).